The chain runs to 545 residues: Capsular polysaccharide phosphotransferase SacB (545 aa).

The protein belongs to the stealth family.

May be the polymerase that links individual UDP-N-acetyl-D-mannosamine monomers. In serotype A the capsule is composed of repeated units of (alpha 1-6)-linked N-acetyl-D-mannosamine-1-phosphate. This is Capsular polysaccharide phosphotransferase SacB (sacB) from Neisseria meningitidis serogroup A.